We begin with the raw amino-acid sequence, 215 residues long: MNMDHSKIPQATAKRLPLYYRFLKNLHASGKQRVSSAELSDAVKVDSATIRRDFSYFGALGKKGYGYNVNYLLSFFRKTLDQDETTNVTLIGVGNLGTAFLHYNFIKNNNTKIAMAFDINEEKIGTEVGGVPVYDLNKLEEHMTDDDIPVAILTVPAQAAQSITDRLVALGIKGILNFTPARLNVPEHIRIHHIDLAVELQSLVYFLKHYSMQEK.

A DNA-binding region (H-T-H motif) is located at residues 18–57; it reads LYYRFLKNLHASGKQRVSSAELSDAVKVDSATIRRDFSYF. Residue 92 to 97 participates in NAD(+) binding; sequence GVGNLG.

The protein belongs to the transcriptional regulatory Rex family. In terms of assembly, homodimer.

The protein localises to the cytoplasm. Modulates transcription in response to changes in cellular NADH/NAD(+) redox state. This Bacillus licheniformis (strain ATCC 14580 / DSM 13 / JCM 2505 / CCUG 7422 / NBRC 12200 / NCIMB 9375 / NCTC 10341 / NRRL NRS-1264 / Gibson 46) protein is Redox-sensing transcriptional repressor Rex.